Consider the following 223-residue polypeptide: UPF0441 protein YgiB (223 aa).

Residues 201–223 (ESVAKQSAMQRSAAGTSTRSMGG) are disordered. Residues 204-223 (AKQSAMQRSAAGTSTRSMGG) are compositionally biased toward polar residues.

Belongs to the UPF0441 family.

The polypeptide is UPF0441 protein YgiB (Salmonella arizonae (strain ATCC BAA-731 / CDC346-86 / RSK2980)).